The chain runs to 345 residues: GTPase Obg (345 aa).

The 159-residue stretch at 1–159 (MKFLDQAKVY…KWIWLRLKLI (159 aa)) folds into the Obg domain. Positions 160-327 (ADAGLVGLPN…ALRALLAVID (168 aa)) constitute an OBG-type G domain. GTP-binding positions include 166-173 (GLPNAGKS), 191-195 (FTTLH), 212-215 (DIPG), 279-282 (SKID), and 308-310 (SSQ). 2 residues coordinate Mg(2+): Ser173 and Thr193.

This sequence belongs to the TRAFAC class OBG-HflX-like GTPase superfamily. OBG GTPase family. Monomer. It depends on Mg(2+) as a cofactor.

The protein localises to the cytoplasm. Its function is as follows. An essential GTPase which binds GTP, GDP and possibly (p)ppGpp with moderate affinity, with high nucleotide exchange rates and a fairly low GTP hydrolysis rate. Plays a role in control of the cell cycle, stress response, ribosome biogenesis and in those bacteria that undergo differentiation, in morphogenesis control. This Azorhizobium caulinodans (strain ATCC 43989 / DSM 5975 / JCM 20966 / LMG 6465 / NBRC 14845 / NCIMB 13405 / ORS 571) protein is GTPase Obg.